A 466-amino-acid polypeptide reads, in one-letter code: ATP synthase subunit beta (466 aa).

153 to 160 (GGAGVGKT) contributes to the ATP binding site.

The protein belongs to the ATPase alpha/beta chains family. As to quaternary structure, F-type ATPases have 2 components, CF(1) - the catalytic core - and CF(0) - the membrane proton channel. CF(1) has five subunits: alpha(3), beta(3), gamma(1), delta(1), epsilon(1). CF(0) has three main subunits: a(1), b(2) and c(9-12). The alpha and beta chains form an alternating ring which encloses part of the gamma chain. CF(1) is attached to CF(0) by a central stalk formed by the gamma and epsilon chains, while a peripheral stalk is formed by the delta and b chains.

The protein localises to the cell membrane. It catalyses the reaction ATP + H2O + 4 H(+)(in) = ADP + phosphate + 5 H(+)(out). Functionally, produces ATP from ADP in the presence of a proton gradient across the membrane. The catalytic sites are hosted primarily by the beta subunits. The chain is ATP synthase subunit beta from Leuconostoc citreum (strain KM20).